The chain runs to 630 residues: Protein zwilch homolog (630 aa).

Belongs to the ZWILCH family. Component of the RZZ complex composed of rod-1, czw-1 and zwl-1. Interacts with the spindly-like protein spdl-1. Interacts with NDC80 complex component ndc-80.

The protein resides in the cytoplasm. It is found in the cell cortex. It localises to the chromosome. The protein localises to the centromere. Its subcellular location is the kinetochore. The protein resides in the cytoskeleton. It is found in the spindle. Its function is as follows. Essential component of the mitotic checkpoint, which prevents cells from prematurely exiting mitosis. Required for chromosome segregation, the assembly of the dynein-dynactin and mdf-1-mdf-2 complexes onto kinetochores and spindle pole separation. Its function related to the spindle assembly machinery and kinetochore-microtubule attachments likely depends on its association in the mitotic RZZ complex. The RZZ complex recruits the spindly-like protein spdl-1 to kinetochores. To prevent irregular chromosome segregation, the complex also inhibits the attachment of the kinetochore-associated NDC80 complex to microtubules. The recruitment of spdl-1 to kinetochores relieves this inhibition. Required for embryonic development. The protein is Protein zwilch homolog (zwl-1) of Caenorhabditis elegans.